The chain runs to 152 residues: Xanthine-guanine phosphoribosyltransferase (152 aa).

5-phospho-alpha-D-ribose 1-diphosphate contacts are provided by residues Arg-37–Gly-38, Arg-69, and Asp-88–Thr-96. A GMP-binding site is contributed by Arg-69. Residue Asp-89 coordinates Mg(2+). Guanine contacts are provided by Asp-92 and Ile-135. Residues Asp-92 and Ile-135 each contribute to the xanthine site. GMP contacts are provided by residues Asp-92–Thr-96 and Trp-134–Ile-135.

It belongs to the purine/pyrimidine phosphoribosyltransferase family. XGPT subfamily. As to quaternary structure, homotetramer. The cofactor is Mg(2+).

Its subcellular location is the cell inner membrane. It carries out the reaction GMP + diphosphate = guanine + 5-phospho-alpha-D-ribose 1-diphosphate. It catalyses the reaction XMP + diphosphate = xanthine + 5-phospho-alpha-D-ribose 1-diphosphate. The catalysed reaction is IMP + diphosphate = hypoxanthine + 5-phospho-alpha-D-ribose 1-diphosphate. The protein operates within purine metabolism; GMP biosynthesis via salvage pathway; GMP from guanine: step 1/1. Its pathway is purine metabolism; XMP biosynthesis via salvage pathway; XMP from xanthine: step 1/1. Its function is as follows. Purine salvage pathway enzyme that catalyzes the transfer of the ribosyl-5-phosphate group from 5-phospho-alpha-D-ribose 1-diphosphate (PRPP) to the N9 position of the 6-oxopurines guanine and xanthine to form the corresponding ribonucleotides GMP (guanosine 5'-monophosphate) and XMP (xanthosine 5'-monophosphate), with the release of PPi. To a lesser extent, also acts on hypoxanthine. This chain is Xanthine-guanine phosphoribosyltransferase, found in Erwinia tasmaniensis (strain DSM 17950 / CFBP 7177 / CIP 109463 / NCPPB 4357 / Et1/99).